The following is a 670-amino-acid chain: Transcription factor 4 (670 aa).

The tract at residues 1 to 83 is essential for MYOD1 inhibition; sequence MHHQQRMAAL…GTPYDHMTSR (83 aa). 6 disordered regions span residues 24–244, 262–320, 335–378, 406–426, 465–573, and 637–670; these read AMFS…LGNS, LSYP…SQTG, HTNN…EGPL, PSTA…PSHN, SLLP…MANN, and KRRE…MGQM. Residues 29–49 show a composition bias toward polar residues; the sequence is PVSSGKNGPTSLASGHFTGSN. Residues Ser66, Ser87, and Ser92 each carry the phosphoserine modification. 4 stretches are compositionally biased toward polar residues: residues 107-125, 136-154, 205-215, and 265-305; these read GSYS…QQSL, GTLS…SSNN, PAASTFPSSFF, and PSHS…TDSI. The span at 336–347 shows a compositional bias: low complexity; sequence TNNSFSSNPSTP. Residues 364-373 show a composition bias toward polar residues; it reads NGGQASSSPN. Position 371 is a phosphoserine (Ser371). The tract at residues 378–399 is leucine-zipper; it reads LHSLQSRIEDRLERLDDAIHVL. 2 stretches are compositionally biased toward low complexity: residues 466 to 479 and 502 to 511; these read LLPN…LPVQ and GQSVSSGSSE. Ser514 is modified (phosphoserine). Composition is skewed to basic and acidic residues over residues 526-542 and 558-573; these read KSSE…DIKS and PEQK…MANN. Residues 567 to 620 enclose the bHLH domain; the sequence is ERRMANNARERLRVRDINEAFKELGRMVQLHLKSDKPQTKLLILHQAVAVILSL. The tract at residues 622-645 is class A specific domain; sequence QQVRERNLNPKAACLKRREEEKVS.

In terms of assembly, efficient DNA binding requires dimerization with another bHLH protein. Isoform 2 seems to form inactive heterodimers with MYOD1. Interacts with HIVEP2. Interacts with NEUROD2. Interacts with AGBL1. Interacts with BHLHA9. In terms of tissue distribution, expressed in the cerebral cortex, Purkinje and granule cell layers of the cerebellum, olfactory neuroepithelium, pyramidal cells of hippocampal layers CA1-CA4, and in the granular cells of the dentate gyrus.

The protein resides in the nucleus. Transcription factor that binds to the immunoglobulin enhancer Mu-E5/KE5-motif. Involved in the initiation of neuronal differentiation. Activates transcription by binding to the E box (5'-CANNTG-3'). Isoform 2 inhibits MYOD1 activation of the cardiac alpha-actin promoter. Binds to the E-box present in the somatostatin receptor 2 initiator element (SSTR2-INR) to activate transcription. May have a regulatory function in developmental processes as well as during neuronal plasticity. This is Transcription factor 4 (Tcf4) from Mus musculus (Mouse).